A 131-amino-acid polypeptide reads, in one-letter code: Large-conductance mechanosensitive channel (131 aa).

2 helical membrane passes run 14 to 34 (VMDMAVGIIIGAAFTAIVTSL) and 71 to 91 (GNFIMAVINFLIIAWVVFLLV).

It belongs to the MscL family. Homopentamer.

The protein resides in the cell inner membrane. Its function is as follows. Channel that opens in response to stretch forces in the membrane lipid bilayer. May participate in the regulation of osmotic pressure changes within the cell. The chain is Large-conductance mechanosensitive channel from Dinoroseobacter shibae (strain DSM 16493 / NCIMB 14021 / DFL 12).